We begin with the raw amino-acid sequence, 459 residues long: Septin-4 (459 aa).

Residues Ser-10, Ser-49, Ser-98, and Ser-99 each carry the phosphoserine modification. Disordered regions lie at residues 18–52 and 70–98; these read FVKDFPGSEPCHPTESKTRVARPQILEPRPQSPDL and SQQYFCPPAPLSPSSRPRSPWGKLDPYDS. Positions 122 to 395 constitute a Septin-type G domain; the sequence is KGFDFTLMVA…ENYRAQCIQS (274 aa). A G1 motif region spans residues 132 to 139; the sequence is GESGLGKS. Residues 132–139 and Thr-166 contribute to the GTP site; that span reads GESGLGKS. The G3 motif stretch occupies residues 189–192; that stretch reads DTPG. The segment at 270–273 is G4 motif; sequence AKAD. 271–279 lines the GTP pocket; that stretch reads KADTLTPSE. Ser-306 bears the Phosphoserine mark. The GTP site is built by Gly-329 and Arg-344. Residues 410-430 are disordered; that stretch reads TRESGTDFPIPAVPPGTDPET. The residue at position 413 (Ser-413) is a Phosphoserine. Phosphothreonine is present on Thr-415. The stretch at 434-459 forms a coiled coil; the sequence is IREKDEELRRMQEMLHKIQRQMKETH.

The protein belongs to the TRAFAC class TrmE-Era-EngA-EngB-Septin-like GTPase superfamily. Septin GTPase family. As to quaternary structure, septins polymerize into heterooligomeric protein complexes that form filaments, and can associate with cellular membranes, actin filaments and microtubules. GTPase activity is required for filament formation. Interacts with SEPTIN8. Component of a septin core octameric complex consisting of SEPTIN12, SEPTIN7, SEPTIN6 and SEPTIN2 or SEPTIN4 in the order 12-7-6-2-2-6-7-12 or 12-7-6-4-4-6-7-12. Interacts with SEPTIN14 (via C-terminus). Interacts with DYRK1A. Interacts with SLC6A3/DAT and SNCA/alpha-synuclein. Interacts with STX1A; in the striatum. Interacts with XIAP (via BIR3 domain) following the induction of apoptosis. Interacts with AREL1 (via HECT domain); in the cytoplasm following induction of apoptosis. Post-translationally, phosphorylated by DYRK1A.

It is found in the cytoplasm. Its subcellular location is the cell projection. The protein resides in the cilium. It localises to the flagellum. The protein localises to the cytoplasmic vesicle. It is found in the secretory vesicle. Its subcellular location is the axon. The protein resides in the dendrite. It localises to the perikaryon. Its function is as follows. Filament-forming cytoskeletal GTPase. Pro-apoptotic protein involved in LGR5-positive intestinal stem cell and Paneth cell expansion in the intestines, via its interaction with XIAP. May also play a role in the regulation of cell fate in the intestine. Positive regulator of apoptosis involved in hematopoietic stem cell homeostasis; via its interaction with XIAP. Negative regulator of repair and hair follicle regeneration in response to injury, due to inhibition of hair follicle stem cell proliferation, potentially via its interaction with XIAP. Plays an important role in male fertility and sperm motility. During spermiogenesis, essential for the establishment of the annulus (a fibrous ring structure connecting the midpiece and the principal piece of the sperm flagellum) which is a requisite for the structural and mechanical integrity of the sperm. Involved in the migration of cortical neurons and the formation of neuron leading processes during embryonic development. Required for dopaminergic metabolism in presynaptic autoreceptors; potentially via activity as a presynaptic scaffold protein. This chain is Septin-4, found in Rattus norvegicus (Rat).